The sequence spans 252 residues: Chitooligosaccharide deacetylase (252 aa).

His61 and His125 together coordinate Mg(2+).

The protein belongs to the YdjC deacetylase family. ChbG subfamily. Homodimer. Mg(2+) serves as cofactor.

Its subcellular location is the cytoplasm. It catalyses the reaction N,N'-diacetylchitobiose + H2O = N-acetyl-beta-D-glucosaminyl-(1-&gt;4)-D-glucosamine + acetate. It carries out the reaction diacetylchitobiose-6'-phosphate + H2O = N'-monoacetylchitobiose-6'-phosphate + acetate. It participates in glycan degradation; chitin degradation. In terms of biological role, involved in the degradation of chitin. ChbG is essential for growth on the acetylated chitooligosaccharides chitobiose and chitotriose but is dispensable for growth on cellobiose and chitosan dimer, the deacetylated form of chitobiose. Deacetylation of chitobiose-6-P and chitotriose-6-P is necessary for both the activation of the chb promoter by the regulatory protein ChbR and the hydrolysis of phosphorylated beta-glucosides by the phospho-beta-glucosidase ChbF. Catalyzes the removal of only one acetyl group from chitobiose-6-P to yield monoacetylchitobiose-6-P, the inducer of ChbR and the substrate of ChbF. The protein is Chitooligosaccharide deacetylase of Salmonella paratyphi C (strain RKS4594).